Reading from the N-terminus, the 120-residue chain is Immunoglobulin lambda variable 2-14 (120 aa).

A signal peptide spans 1 to 19; that stretch reads MAWALLLLTLLTQGTGSWA. At Gln20 the chain carries Pyrrolidone carboxylic acid. Residues 20–44 form a framework-1 region; sequence QSALTQPASVSGSPGQSITISCTGT. The region spanning 20–119 is the Ig-like domain; sequence QSALTQPASV…SSYTSSSTLH (100 aa). The cysteines at positions 41 and 109 are disulfide-linked. The interval 45–53 is complementarity-determining-1; that stretch reads SSDVGGYNY. The segment at 54 to 70 is framework-2; that stretch reads VSWYQQHPGKAPKLMIY. Positions 71 to 73 are complementarity-determining-2; it reads EVS. Residues 74–109 are framework-3; the sequence is NRPSGVSNRFSGSKSGNTASLTISGLQAEDEADYYC. The complementarity-determining-3 stretch occupies residues 110–119; that stretch reads SSYTSSSTLH.

In terms of assembly, immunoglobulins are composed of two identical heavy chains and two identical light chains; disulfide-linked.

It localises to the secreted. Its subcellular location is the cell membrane. In terms of biological role, v region of the variable domain of immunoglobulin light chains that participates in the antigen recognition. Immunoglobulins, also known as antibodies, are membrane-bound or secreted glycoproteins produced by B lymphocytes. In the recognition phase of humoral immunity, the membrane-bound immunoglobulins serve as receptors which, upon binding of a specific antigen, trigger the clonal expansion and differentiation of B lymphocytes into immunoglobulins-secreting plasma cells. Secreted immunoglobulins mediate the effector phase of humoral immunity, which results in the elimination of bound antigens. The antigen binding site is formed by the variable domain of one heavy chain, together with that of its associated light chain. Thus, each immunoglobulin has two antigen binding sites with remarkable affinity for a particular antigen. The variable domains are assembled by a process called V-(D)-J rearrangement and can then be subjected to somatic hypermutations which, after exposure to antigen and selection, allow affinity maturation for a particular antigen. This chain is Immunoglobulin lambda variable 2-14, found in Homo sapiens (Human).